We begin with the raw amino-acid sequence, 125 residues long: Period circadian protein (125 aa).

A disordered region spans residues 1 to 125 (EGSGGSGSSG…VTLTESLLNK (125 aa)). A run of 3 repeats spans residues 30–31 (GT), 33–34 (GT), and 35–36 (GT). Gly residues predominate over residues 30–84 (GTGGTGTNTGTNTGTGTGTGTGTGTGTGTGTGTGTGTGTGTGTGTGTGKGAGAGT). Residues 30 to 86 (GTGGTGTNTGTNTGTGTGTGTGTGTGTGTGTGTGTGTGTGTGTGTGTGKGAGAGTGT) are 28 X 2 AA approximate tandem repeats of G-[TA]. One copy of the 4; approximate repeat lies at 37–38 (NT). Residues 39 to 40 (GT) form repeat 5. One copy of the 6; approximate repeat lies at 41-42 (NT). 17 tandem repeats follow at residues 43-44 (GT), 45-46 (GT), 47-48 (GT), 49-50 (GT), 51-52 (GT), 53-54 (GT), 55-56 (GT), 57-58 (GT), 59-60 (GT), 61-62 (GT), 63-64 (GT), 65-66 (GT), 67-68 (GT), 69-70 (GT), 71-72 (GT), 73-74 (GT), and 75-76 (GT). Residues 77–78 (GK) form a 24; approximate repeat. Tandem repeats lie at residues 79–80 (GA), 81–82 (GA), 83–84 (GT), and 85–86 (GT). Positions 85–112 (GTATNETAGPGTTTTTTTRSTTTAATAA) are enriched in low complexity. The segment covering 116 to 125 (VTLTESLLNK) has biased composition (polar residues).

In terms of assembly, forms a heterodimer with timeless (TIM); the complex then translocates into the nucleus. In terms of processing, phosphorylated with a circadian rhythmicity, probably by the double-time protein (dbt). Phosphorylation could be implicated in the stability of per monomer and in the formation of heterodimer per-tim.

Its subcellular location is the nucleus. The protein resides in the cytoplasm. It is found in the perinuclear region. Essential for biological clock functions. Determines the period length of circadian and ultradian rhythms; an increase in PER dosage leads to shortened circadian rhythms and a decrease leads to lengthened circadian rhythms. Essential for the circadian rhythmicity of locomotor activity, eclosion behavior, and for the rhythmic component of the male courtship song that originates in the thoracic nervous system. The biological cycle depends on the rhythmic formation and nuclear localization of the TIM-PER complex. Light induces the degradation of TIM, which promotes elimination of PER. Nuclear activity of the heterodimer coordinatively regulates PER and TIM transcription through a negative feedback loop. Behaves as a negative element in circadian transcriptional loop. Does not appear to bind DNA, suggesting indirect transcriptional inhibition. The chain is Period circadian protein (per) from Drosophila ananassae (Fruit fly).